The sequence spans 252 residues: Small ribosomal subunit protein uS3 (252 aa).

The 71-residue stretch at Ile39–Val109 folds into the KH type-2 domain. The segment covering Glu221–Ser241 has biased composition (basic and acidic residues). Residues Glu221 to Gly252 form a disordered region. Residues Gln242–Gly252 show a composition bias toward basic residues.

This sequence belongs to the universal ribosomal protein uS3 family. As to quaternary structure, part of the 30S ribosomal subunit. Forms a tight complex with proteins S10 and S14.

In terms of biological role, binds the lower part of the 30S subunit head. Binds mRNA in the 70S ribosome, positioning it for translation. The protein is Small ribosomal subunit protein uS3 of Chlorobium luteolum (strain DSM 273 / BCRC 81028 / 2530) (Pelodictyon luteolum).